The chain runs to 77 residues: Large ribosomal subunit protein eL14 (77 aa).

This sequence belongs to the eukaryotic ribosomal protein eL14 family.

This is Large ribosomal subunit protein eL14 from Methanococcus maripaludis (strain C5 / ATCC BAA-1333).